Here is a 488-residue protein sequence, read N- to C-terminus: Elongation factor Tu, chloroplastic (488 aa).

The interval methionine 1–proline 20 is disordered. Residues methionine 1 to arginine 79 constitute a chloroplast transit peptide. Positions lysine 89–glutamine 293 constitute a tr-type G domain. The interval glycine 98 to threonine 105 is G1. GTP is bound at residue glycine 98–threonine 105. The interval glycine 139–asparagine 143 is G2. The G3 stretch occupies residues aspartate 160 to glycine 163. Residues aspartate 160–histidine 164 and asparagine 215–aspartate 218 each bind GTP. Residues asparagine 215–aspartate 218 are G4. The segment at serine 253–leucine 255 is G5.

Belongs to the TRAFAC class translation factor GTPase superfamily. Classic translation factor GTPase family. EF-Tu/EF-1A subfamily. As to expression, higher expression in leaves than in roots.

The protein localises to the plastid. The protein resides in the chloroplast. This protein promotes the GTP-dependent binding of aminoacyl-tRNA to the A-site of ribosomes during protein biosynthesis. This is Elongation factor Tu, chloroplastic (tufA) from Pisum sativum (Garden pea).